The following is an 84-amino-acid chain: Peptide Ctry2346 (84 aa).

An N-terminal signal peptide occupies residues 1–23; the sequence is MKTQTLLFTFSLVLLMVATQTEA. A Leucine amide modification is found at Leu33. Residues 37–84 constitute a propeptide that is removed on maturation; the sequence is GLLDNLLGKRGLLFGKRALTNQDLFDLAYDPSLSAADMDALEMLLENY.

The protein belongs to the non-disulfide-bridged peptide (NDBP) superfamily. Short antimicrobial peptide (group 4) family. As to expression, expressed by the venom gland.

Its subcellular location is the secreted. It is found in the target cell membrane. Antimicrobial peptide. The polypeptide is Peptide Ctry2346 (Chaerilus tryznai (Scorpion)).